A 444-amino-acid chain; its full sequence is Exodeoxyribonuclease 7 large subunit (444 aa).

Belongs to the XseA family. As to quaternary structure, heterooligomer composed of large and small subunits.

Its subcellular location is the cytoplasm. The catalysed reaction is Exonucleolytic cleavage in either 5'- to 3'- or 3'- to 5'-direction to yield nucleoside 5'-phosphates.. Its function is as follows. Bidirectionally degrades single-stranded DNA into large acid-insoluble oligonucleotides, which are then degraded further into small acid-soluble oligonucleotides. The chain is Exodeoxyribonuclease 7 large subunit from Rickettsia canadensis (strain McKiel).